We begin with the raw amino-acid sequence, 359 residues long: Dual-specificity RNA methyltransferase RlmN (359 aa).

Glutamate 98 (proton acceptor) is an active-site residue. In terms of domain architecture, Radical SAM core spans 104–329 (EPKRGTLCIS…LEHGLTATIR (226 aa)). The cysteines at positions 111 and 340 are disulfide-linked. Residues cysteine 118, cysteine 122, and cysteine 125 each coordinate [4Fe-4S] cluster. Residues 166 to 167 (GE), serine 198, 220 to 222 (SLH), and asparagine 297 each bind S-adenosyl-L-methionine. Cysteine 340 (S-methylcysteine intermediate) is an active-site residue.

The protein belongs to the radical SAM superfamily. RlmN family. It depends on [4Fe-4S] cluster as a cofactor.

The protein resides in the cytoplasm. It carries out the reaction adenosine(2503) in 23S rRNA + 2 reduced [2Fe-2S]-[ferredoxin] + 2 S-adenosyl-L-methionine = 2-methyladenosine(2503) in 23S rRNA + 5'-deoxyadenosine + L-methionine + 2 oxidized [2Fe-2S]-[ferredoxin] + S-adenosyl-L-homocysteine. The catalysed reaction is adenosine(37) in tRNA + 2 reduced [2Fe-2S]-[ferredoxin] + 2 S-adenosyl-L-methionine = 2-methyladenosine(37) in tRNA + 5'-deoxyadenosine + L-methionine + 2 oxidized [2Fe-2S]-[ferredoxin] + S-adenosyl-L-homocysteine. In terms of biological role, specifically methylates position 2 of adenine 2503 in 23S rRNA and position 2 of adenine 37 in tRNAs. m2A2503 modification seems to play a crucial role in the proofreading step occurring at the peptidyl transferase center and thus would serve to optimize ribosomal fidelity. The protein is Dual-specificity RNA methyltransferase RlmN of Halorhodospira halophila (strain DSM 244 / SL1) (Ectothiorhodospira halophila (strain DSM 244 / SL1)).